Consider the following 149-residue polypeptide: MSELKKMKIRLLKLHPNAVIPAYQSAGAAGFDLCCVESLEIPPLGRALVSTGLALALEEGYELQIRPRSGLALKHGITVLNTPGTVDSDYRGEIKVILINLGAESFSIQAGDRIAQGVVSRLSIAELCEVESLDETARGAGGFGSTGKS.

Residues 68-70 (RSG), Asn81, 85-87 (TVD), and Lys95 contribute to the substrate site.

Belongs to the dUTPase family. Requires Mg(2+) as cofactor.

The enzyme catalyses dUTP + H2O = dUMP + diphosphate + H(+). It functions in the pathway pyrimidine metabolism; dUMP biosynthesis; dUMP from dCTP (dUTP route): step 2/2. In terms of biological role, this enzyme is involved in nucleotide metabolism: it produces dUMP, the immediate precursor of thymidine nucleotides and it decreases the intracellular concentration of dUTP so that uracil cannot be incorporated into DNA. This is Deoxyuridine 5'-triphosphate nucleotidohydrolase from Wolinella succinogenes (strain ATCC 29543 / DSM 1740 / CCUG 13145 / JCM 31913 / LMG 7466 / NCTC 11488 / FDC 602W) (Vibrio succinogenes).